An 815-amino-acid polypeptide reads, in one-letter code: Protein-glutamine gamma-glutamyltransferase K (815 aa).

2 disordered regions span residues 1 to 40 (MDGPRSDVGRWGGNPWQPPTTPSPEPEPEPEPERRSRRGG) and 59 to 100 (DDWG…AAGD). Pro residues predominate over residues 16–25 (WQPPTTPSPE). Thr21 bears the Phosphothreonine mark. A phosphoserine mark is found at Ser23, Ser80, Ser83, Ser90, and Ser93. The segment covering 59-87 (DDWGPEPHRDRGSGSGRRRPDSRGSDSRR) has biased composition (basic and acidic residues). Catalysis depends on residues Cys375, His434, and Asp457. Asn497, Asp499, Glu546, and Glu551 together coordinate Ca(2+). The segment at 795 to 815 (SNAGGNSPLGETIPMASRGGA) is disordered.

Belongs to the transglutaminase superfamily. Transglutaminase family. As to quaternary structure, interacts with PLAAT4. The cofactor is Ca(2+). Palmitoylated. Post-translationally, the membrane anchorage region possesses a cluster of five cysteines within which fatty acid(s) may become thioester-linked. It is subject to phorbol ester-stimulated phosphorylation and is hypersensitive to proteolysis, which releases the enzyme in a soluble form. In terms of processing, tyrosine-phosphorylated.

It is found in the membrane. It catalyses the reaction L-glutaminyl-[protein] + L-lysyl-[protein] = [protein]-L-lysyl-N(6)-5-L-glutamyl-[protein] + NH4(+). Functionally, catalyzes the cross-linking of proteins and the conjugation of polyamines to proteins. Responsible for cross-linking epidermal proteins during formation of the stratum corneum. Involved in cell proliferation. This Canis lupus familiaris (Dog) protein is Protein-glutamine gamma-glutamyltransferase K (TGM1).